Consider the following 336-residue polypeptide: Fructose-1,6-bisphosphatase class 1 (336 aa).

Mg(2+) contacts are provided by Glu-90, Asp-112, Leu-114, and Asp-115. Substrate-binding positions include 115–118 (DGSS), Asn-211, and Lys-277. Glu-283 provides a ligand contact to Mg(2+).

This sequence belongs to the FBPase class 1 family. Homotetramer. It depends on Mg(2+) as a cofactor.

The protein resides in the cytoplasm. The enzyme catalyses beta-D-fructose 1,6-bisphosphate + H2O = beta-D-fructose 6-phosphate + phosphate. The protein operates within carbohydrate biosynthesis; gluconeogenesis. The protein is Fructose-1,6-bisphosphatase class 1 of Pseudomonas putida (strain ATCC 700007 / DSM 6899 / JCM 31910 / BCRC 17059 / LMG 24140 / F1).